The following is a 527-amino-acid chain: N-acetylglucosamine-1-phosphodiester alpha-N-acetylglucosaminidase (527 aa).

An N-terminal signal peptide occupies residues 1 to 25 (MASSMGRFLLFFIALRGFLLEASGD). Positions 26–49 (FGSGASRDDDVLLPYSRARARLAR) are cleaved as a propeptide — removed in mature form. At 50–463 (DCTRVHAGRL…SLLTRTTWLA (414 aa)) the chain is on the lumenal side. 5 cysteine pairs are disulfide-bonded: Cys-116–Cys-149, Cys-133–Cys-324, Cys-308–Cys-315, Cys-363–Cys-374, and Cys-381–Cys-390. Asn-209, Asn-215, and Asn-297 each carry an N-linked (GlcNAc...) asparagine glycan. The 33-residue stretch at 359–391 (DKLDCGPANCSQHGLCTETGCRCEAGWTGSNCS) folds into the EGF-like domain. Asn-367, Asn-389, and Asn-421 each carry an N-linked (GlcNAc...) asparagine glycan. A helical transmembrane segment spans residues 464–484 (ITLALAFLLLISTAANVSLFL). Topologically, residues 485–527 (GSRAARRRHLDGAYVYHPLQEVNGEHPAAEKEQLGDSSNPFKD) are cytoplasmic. The tract at residues 498–505 (YVYHPLQE) is mediates the interaction with AP4M1. The Tyrosine-based internalization motif motif lies at 500 to 503 (YHPL). The NPF internalization motif signature appears at 523-527 (NPFKD).

In terms of assembly, homotetramer arranged as two disulfide-linked homodimers. Interacts with AP4M1. Glycosylated. Contains complex N-linked oligosaccharides with appreciable amounts of sialic acid. Post-translationally, the precursor is cleaved and activated in the trans-Golgi network by a furin endopeptidase.

The protein resides in the golgi apparatus. It is found in the golgi stack membrane. It localises to the trans-Golgi network. It catalyses the reaction N(4)-[6-(N-acetyl-alpha-D-glucosaminyl-1-phospho)-alpha-D-mannosyl-(1-&gt;2)-alpha-D-mannosyl-(glycan)]-L-asparaginyl-[protein] + H2O = N(4)-[6-phospho-alpha-D-mannosyl-(1-&gt;2)-alpha-D-mannosyl-(glycan)]-L-asparaginyl-[protein] + N-acetyl-D-glucosamine + H(+). It participates in protein modification; protein glycosylation. Catalyzes the second step in the formation of the mannose 6-phosphate targeting signal on lysosomal enzyme oligosaccharides by removing GlcNAc residues from GlcNAc-alpha-P-mannose moieties, which are formed in the first step. Also hydrolyzes UDP-GlcNAc, a sugar donor for Golgi N-acetylglucosaminyltransferases. The chain is N-acetylglucosamine-1-phosphodiester alpha-N-acetylglucosaminidase (NAGPA) from Bos taurus (Bovine).